Consider the following 265-residue polypeptide: Insulin-like growth factor-binding protein 5 (265 aa).

The N-terminal stretch at M1–A21 is a signal peptide. The 81-residue stretch at S24–L104 folds into the IGFBP N-terminal domain. Cystine bridges form between C28–C54, C31–C56, C39–C57, C46–C60, C68–C81, and C75–C101. The segment covering S111 to D121 has biased composition (basic and acidic residues). Positions S111–G137 are disordered. The 75-residue stretch at M182–C256 folds into the Thyroglobulin type-1 domain. Intrachain disulfides connect C185-C212, C223-C234, and C236-C256.

The protein localises to the secreted. In terms of biological role, IGF-binding proteins prolong the half-life of the IGFs and have been shown to either inhibit or stimulate the growth promoting effects of the IGFs on cell culture. They alter the interaction of IGFs with their cell surface receptors. Promotes anterior neural development by stimulating insulin growth factor (IGF) signaling via IGF receptors. The sequence is that of Insulin-like growth factor-binding protein 5 from Xenopus laevis (African clawed frog).